We begin with the raw amino-acid sequence, 232 residues long: 5'-methylthioadenosine/S-adenosylhomocysteine nucleosidase (232 aa).

Glu-12 acts as the Proton acceptor in catalysis. Residues Gly-78, Ile-152, and 173–174 (ME) each bind substrate. The active-site Proton donor is Asp-197.

It belongs to the PNP/UDP phosphorylase family. MtnN subfamily. Homodimer.

The enzyme catalyses S-adenosyl-L-homocysteine + H2O = S-(5-deoxy-D-ribos-5-yl)-L-homocysteine + adenine. It carries out the reaction S-methyl-5'-thioadenosine + H2O = 5-(methylsulfanyl)-D-ribose + adenine. It catalyses the reaction 5'-deoxyadenosine + H2O = 5-deoxy-D-ribose + adenine. Its pathway is amino-acid biosynthesis; L-methionine biosynthesis via salvage pathway; S-methyl-5-thio-alpha-D-ribose 1-phosphate from S-methyl-5'-thioadenosine (hydrolase route): step 1/2. Functionally, catalyzes the irreversible cleavage of the glycosidic bond in both 5'-methylthioadenosine (MTA) and S-adenosylhomocysteine (SAH/AdoHcy) to adenine and the corresponding thioribose, 5'-methylthioribose and S-ribosylhomocysteine, respectively. Also cleaves 5'-deoxyadenosine, a toxic by-product of radical S-adenosylmethionine (SAM) enzymes, into 5-deoxyribose and adenine. Thus, is required for in vivo function of the radical SAM enzymes biotin synthase and lipoic acid synthase, that are inhibited by 5'-deoxyadenosine accumulation. This Salmonella paratyphi B (strain ATCC BAA-1250 / SPB7) protein is 5'-methylthioadenosine/S-adenosylhomocysteine nucleosidase.